The sequence spans 905 residues: DNA mismatch repair protein MutS (905 aa).

A disordered region spans residues 1–95 (MELSLQGSLF…PAWGHHSQLK (95 aa)). The span at 38-50 (NLSDADLSKDALA) shows a compositional bias: basic and acidic residues. 721–728 (GPNASGKS) lines the ATP pocket.

It belongs to the DNA mismatch repair MutS family.

Its function is as follows. This protein is involved in the repair of mismatches in DNA. It is possible that it carries out the mismatch recognition step. This protein has a weak ATPase activity. This chain is DNA mismatch repair protein MutS, found in Synechococcus sp. (strain CC9902).